A 421-amino-acid chain; its full sequence is Mannose-1-phosphate guanyltransferase alpha-A (421 aa).

The protein belongs to the transferase hexapeptide repeat family.

It catalyses the reaction alpha-D-mannose 1-phosphate + GTP + H(+) = GDP-alpha-D-mannose + diphosphate. It functions in the pathway nucleotide-sugar biosynthesis; GDP-alpha-D-mannose biosynthesis; GDP-alpha-D-mannose from alpha-D-mannose 1-phosphate (GTP route): step 1/1. In Xenopus laevis (African clawed frog), this protein is Mannose-1-phosphate guanyltransferase alpha-A (gmppa-a).